The primary structure comprises 590 residues: Aspartate--tRNA(Asp/Asn) ligase (590 aa).

L-aspartate is bound at residue E175. The segment at 199 to 202 (QQYK) is aspartate. Residues R221 and H450 each contribute to the L-aspartate site. Position 221–223 (221–223 (RDE)) interacts with ATP. ATP is bound at residue E484. R491 is an L-aspartate binding site. 536–539 (GVDR) contacts ATP.

The protein belongs to the class-II aminoacyl-tRNA synthetase family. Type 1 subfamily. Homodimer.

The protein localises to the cytoplasm. It catalyses the reaction tRNA(Asx) + L-aspartate + ATP = L-aspartyl-tRNA(Asx) + AMP + diphosphate. Functionally, aspartyl-tRNA synthetase with relaxed tRNA specificity since it is able to aspartylate not only its cognate tRNA(Asp) but also tRNA(Asn). Reaction proceeds in two steps: L-aspartate is first activated by ATP to form Asp-AMP and then transferred to the acceptor end of tRNA(Asp/Asn). This is Aspartate--tRNA(Asp/Asn) ligase from Bradyrhizobium sp. (strain ORS 278).